Here is a 373-residue protein sequence, read N- to C-terminus: Probable tRNA sulfurtransferase (373 aa).

Residues 54 to 158 enclose the THUMP domain; that stretch reads NKNIEELSKV…NDVAYFYHKI (105 aa). ATP-binding positions include 176–177, 201–202, Lys256, Gly278, and Gln287; these read LF and NF.

The protein belongs to the ThiI family.

The protein resides in the cytoplasm. The catalysed reaction is [ThiI sulfur-carrier protein]-S-sulfanyl-L-cysteine + a uridine in tRNA + 2 reduced [2Fe-2S]-[ferredoxin] + ATP + H(+) = [ThiI sulfur-carrier protein]-L-cysteine + a 4-thiouridine in tRNA + 2 oxidized [2Fe-2S]-[ferredoxin] + AMP + diphosphate. The enzyme catalyses [ThiS sulfur-carrier protein]-C-terminal Gly-Gly-AMP + S-sulfanyl-L-cysteinyl-[cysteine desulfurase] + AH2 = [ThiS sulfur-carrier protein]-C-terminal-Gly-aminoethanethioate + L-cysteinyl-[cysteine desulfurase] + A + AMP + 2 H(+). The protein operates within cofactor biosynthesis; thiamine diphosphate biosynthesis. In terms of biological role, catalyzes the ATP-dependent transfer of a sulfur to tRNA to produce 4-thiouridine in position 8 of tRNAs, which functions as a near-UV photosensor. Also catalyzes the transfer of sulfur to the sulfur carrier protein ThiS, forming ThiS-thiocarboxylate. This is a step in the synthesis of thiazole, in the thiamine biosynthesis pathway. The sulfur is donated as persulfide by IscS. The protein is Probable tRNA sulfurtransferase of Saccharolobus islandicus (strain M.14.25 / Kamchatka #1) (Sulfolobus islandicus).